A 546-amino-acid chain; its full sequence is Membrane protein insertase YidC (546 aa).

A helical membrane pass occupies residues 8–28 (ILLATVLSVGILILWQVIFPT). The interval 31–70 (VPPKPAPPPAAEVAKPAAPASPAPGAAAPAVPAPPPDAPE) is disordered. The span at 41-60 (AEVAKPAAPASPAPGAAAPA) shows a compositional bias: low complexity. The next 5 helical transmembrane spans lie at 326–346 (IDYG…LYVM), 356–376 (WGVA…PLTY), 422–442 (LGGC…YAAL), 459–479 (LTAH…SFVM), and 498–518 (FFPG…TLYI).

The protein belongs to the OXA1/ALB3/YidC family. Type 1 subfamily. In terms of assembly, interacts with the Sec translocase complex via SecD. Specifically interacts with transmembrane segments of nascent integral membrane proteins during membrane integration.

The protein localises to the cell inner membrane. In terms of biological role, required for the insertion and/or proper folding and/or complex formation of integral membrane proteins into the membrane. Involved in integration of membrane proteins that insert both dependently and independently of the Sec translocase complex, as well as at least some lipoproteins. Aids folding of multispanning membrane proteins. The chain is Membrane protein insertase YidC from Anaeromyxobacter sp. (strain K).